A 175-amino-acid chain; its full sequence is Transcriptional activatory protein BadR (175 aa).

An HTH marR-type domain is found at 20-156 (ANRLFFRLYQ…TLHYLLKILD (137 aa)).

Transcriptional activator of genes for the anaerobic degradation of benzoate. The chain is Transcriptional activatory protein BadR (badR) from Rhodopseudomonas palustris (strain ATCC BAA-98 / CGA009).